The chain runs to 485 residues: Homospermidine synthase (485 aa).

Belongs to the saccharopine dehydrogenase family. It depends on NAD(+) as a cofactor.

The catalysed reaction is 2 putrescine = sym-homospermidine + NH4(+). It catalyses the reaction putrescine + spermidine = sym-homospermidine + propane-1,3-diamine. Its function is as follows. Involved in the NAD(+)-dependent synthesis of the polyamine homospermidine from putrescine. The sequence is that of Homospermidine synthase (hss) from Mesorhizobium japonicum (strain LMG 29417 / CECT 9101 / MAFF 303099) (Mesorhizobium loti (strain MAFF 303099)).